We begin with the raw amino-acid sequence, 430 residues long: Anaerobic glycerol-3-phosphate dehydrogenase subunit B (430 aa).

The protein belongs to the anaerobic G-3-P dehydrogenase subunit B family. In terms of assembly, composed of a catalytic GlpA/B dimer and of membrane bound GlpC. The cofactor is FMN.

It carries out the reaction a quinone + sn-glycerol 3-phosphate = dihydroxyacetone phosphate + a quinol. The protein operates within polyol metabolism; glycerol degradation via glycerol kinase pathway; glycerone phosphate from sn-glycerol 3-phosphate (anaerobic route): step 1/1. In terms of biological role, conversion of glycerol 3-phosphate to dihydroxyacetone. Uses fumarate or nitrate as electron acceptor. The sequence is that of Anaerobic glycerol-3-phosphate dehydrogenase subunit B from Actinobacillus succinogenes (strain ATCC 55618 / DSM 22257 / CCUG 43843 / 130Z).